Reading from the N-terminus, the 179-residue chain is Signal peptidase complex catalytic subunit SEC11A (179 aa).

Topologically, residues 1–16 (MLSLDFLDDVRRMNKR) are cytoplasmic. Residues 17 to 36 (QLYYQVLNFGMIVSSALMIW) traverse the membrane as a helical; Signal-anchor for type II membrane protein segment. Residues 37–179 (KGLMVITGSE…LGLFVLVHRE (143 aa)) lie on the Lumenal side of the membrane. Residues Ser-56, His-96, and Asp-122 each act as charge relay system in the active site. Residues 165–176 (AVLFLLGLFVLV) are C-terminal short (CTS) helix.

The protein belongs to the peptidase S26B family. As to quaternary structure, component of the signal peptidase complex paralog A (SPC-A) composed of a catalytic subunit SEC11A and three accessory subunits SPCS1, SPCS2 and SPCS3. Within the complex, interacts with SPCS2 and SPCS3. The complex induces a local thinning of the ER membrane which is used to measure the length of the signal peptide (SP) h-region of protein substrates. This ensures the selectivity of the complex towards h-regions shorter than 18-20 amino acids.

The protein resides in the endoplasmic reticulum membrane. The catalysed reaction is Cleavage of hydrophobic, N-terminal signal or leader sequences from secreted and periplasmic proteins.. Catalytic component of the signal peptidase complex (SPC) which catalyzes the cleavage of N-terminal signal sequences from nascent proteins as they are translocated into the lumen of the endoplasmic reticulum. Specifically cleaves N-terminal signal peptides that contain a hydrophobic alpha-helix (h-region) shorter than 18-20 amino acids. The chain is Signal peptidase complex catalytic subunit SEC11A (SEC11A) from Bos taurus (Bovine).